The sequence spans 314 residues: MPLDVVVVMDPITGIKIAKDTTFALLLEGQRRSHRLHYVHPGSLSLNEGRTFAQIAPLQVRDNKTDWYTLGEFSETQLGQGQIILMRKDPPVNAEFIYDTQLLSIAQAAGAQVINHPQGLRDLNEKLAAQLFPQCCPPTLISRDMRALKMFVQKQEQAILKPLDGMGGHSIFRSSNGDPNLNVILETLTDGGRTLAIAQRYLQQIIEGDKRILLIDGVPIDHCLARIPQGDEFRGNMAAGGRGESRPLNEHDRWIAAQVGPEMRRRGMRFVGIDVIGDYLTEINVTSPTCLRELDAQCGLNIAGQLFDAIETGG.

Residues 125–311 (EKLAAQLFPQ…IAGQLFDAIE (187 aa)) form the ATP-grasp domain. 151 to 208 (FVQKQEQAILKPLDGMGGHSIFRSSNGDPNLNVILETLTDGGRTLAIAQRYLQQIIEG) serves as a coordination point for ATP. Positions 282 and 284 each coordinate Mg(2+).

Belongs to the prokaryotic GSH synthase family. It depends on Mg(2+) as a cofactor. Mn(2+) is required as a cofactor.

It carries out the reaction gamma-L-glutamyl-L-cysteine + glycine + ATP = glutathione + ADP + phosphate + H(+). The protein operates within sulfur metabolism; glutathione biosynthesis; glutathione from L-cysteine and L-glutamate: step 2/2. This chain is Glutathione synthetase, found in Xylella fastidiosa (strain 9a5c).